Reading from the N-terminus, the 435-residue chain is ATP-dependent protease ATPase subunit HslU (435 aa).

ATP contacts are provided by residues Ile-18, 60 to 65, Asp-248, Glu-313, and Arg-385; that span reads GVGKTE.

The protein belongs to the ClpX chaperone family. HslU subfamily. As to quaternary structure, a double ring-shaped homohexamer of HslV is capped on each side by a ring-shaped HslU homohexamer. The assembly of the HslU/HslV complex is dependent on binding of ATP.

The protein localises to the cytoplasm. In terms of biological role, ATPase subunit of a proteasome-like degradation complex; this subunit has chaperone activity. The binding of ATP and its subsequent hydrolysis by HslU are essential for unfolding of protein substrates subsequently hydrolyzed by HslV. HslU recognizes the N-terminal part of its protein substrates and unfolds these before they are guided to HslV for hydrolysis. This Rhizobium leguminosarum bv. trifolii (strain WSM2304) protein is ATP-dependent protease ATPase subunit HslU.